We begin with the raw amino-acid sequence, 628 residues long: (+)-alpha-pinene synthase, chloroplastic (628 aa).

Residues Met-1–Ser-48 constitute a chloroplast transit peptide. Asp-379, Asp-383, and Asp-531 together coordinate Mg(2+). Positions Asp-379–Asp-383 match the DDXXD motif motif. Ser-539 lines the K(+) pocket.

Belongs to the terpene synthase family. Tpsd subfamily. The cofactor is Mg(2+). Requires Mn(2+) as cofactor. K(+) is required as a cofactor.

The protein localises to the plastid. It localises to the chloroplast. The enzyme catalyses (2E)-geranyl diphosphate = (1R,5R)-alpha-pinene + diphosphate. Its pathway is terpene metabolism; oleoresin biosynthesis. Functionally, involved in defensive oleoresin formation in conifers in response to insect attack or other injury. Involved in monoterpene (C10) olefins biosynthesis. Produces mainly (+)-alpha-pinene (97%) with a small amount of (-)-alpha-pinene (3%). This is (+)-alpha-pinene synthase, chloroplastic (PT30) from Pinus taeda (Loblolly pine).